We begin with the raw amino-acid sequence, 1189 residues long: Pesticidal crystal protein Cry1Ca (1189 aa).

Belongs to the delta endotoxin family.

Promotes colloidosmotic lysis by binding to the midgut epithelial cells of many lepidopteran larvae including Spodoptera species. The chain is Pesticidal crystal protein Cry1Ca (cry1Ca) from Bacillus thuringiensis subsp. aizawai.